A 234-amino-acid chain; its full sequence is Matrix protein 1 (234 aa).

The tract at residues 1–103 is disordered; it reads MHERSKPKTT…QELAEGGIRM (103 aa). The segment covering 76–96 has biased composition (basic and acidic residues); sequence CDERSTIGRHGNADERPHQEL. Residues 183–234 adopt a coiled-coil conformation; it reads PEVSFKERMEAEKKKLKELDDKIYKLRRRLRKMEYKKMGINREIDKLEDSVQ.

Interacts with host HSC70.

Its subcellular location is the virion. It localises to the host cytoplasm. The protein localises to the host nucleus. May play a role in virus replication, from virus entry and uncoating to assembly and budding of the virus particle. Interaction of viral NEP with M1-Hsc70 is thought to promote nuclear export of the viral encapsidated genomes. The sequence is that of Matrix protein 1 from Infectious salmon anemia virus (isolate Atlantic salmon/Norway/810/9/99) (ISAV).